The primary structure comprises 624 residues: Adhesion and hyphal regulator 1 (624 aa).

The segment at residues 19-46 (CVTCRDRHIKCDEQQPVCKNCQKSNRKC) is a DNA-binding region (zn(2)-C6 fungal-type). Disordered regions lie at residues 63 to 84 (DDNK…YAFP) and 230 to 250 (PQHH…TDPN). A compositionally biased stretch (polar residues) spans 237–250 (DTSQHQETTSTDPN).

As to quaternary structure, interacts with MCM1.

Its subcellular location is the nucleus. Transcription factor that binds the promoters of genes involved in biofilm formation, which include several key adhesion genes, and recruits MCM1 to these sites. Plays an important role in hyphal growth and virulence. Promotes conversion of opaque cells to white phase, but needs existence of EFG1, a key regulator required for maintenance of the white state. The polypeptide is Adhesion and hyphal regulator 1 (AHR1) (Candida albicans (strain SC5314 / ATCC MYA-2876) (Yeast)).